A 640-amino-acid chain; its full sequence is Putative GTPase-activating protein C1620.12c (640 aa).

The disordered stretch occupies residues Q96–I120. Residues S109–I120 are compositionally biased toward low complexity. The Rab-GAP TBC domain occupies C215–G408. The stretch at R500–E636 forms a coiled coil.

The protein belongs to the GYP5 family.

It localises to the nucleus. It is found in the cytoplasm. This Schizosaccharomyces pombe (strain 972 / ATCC 24843) (Fission yeast) protein is Putative GTPase-activating protein C1620.12c.